The following is a 1921-amino-acid chain: Putative callose synthase 6 (1921 aa).

A disordered region spans residues 1–23 (MEASSSGTAELPRSLSRRAPSRA). The Cytoplasmic portion of the chain corresponds to 1 to 492 (MEASSSGTAE…FWNLFRDFDR (492 aa)). Residues 493 to 513 (MWIFLVMAFQAMVIVGWHGSG) traverse the membrane as a helical segment. At 514-526 (SLGDIFDKDVFKT) the chain is on the extracellular side. The helical transmembrane segment at 527-547 (VLTIFITSAYLTLLQAALDII) threads the bilayer. Topologically, residues 548–560 (LNFNAWKNFKFSQ) are cytoplasmic. Residues 561–581 (ILRYLLKFAVAFMWAVLLPIA) form a helical membrane-spanning segment. The Extracellular portion of the chain corresponds to 582–611 (YSKSVQRPTGVVKFFSTWTGDWKDQSFYTY). The chain crosses the membrane as a helical span at residues 612–632 (AVSFYVLPNILAALLFLVPPF). The Cytoplasmic segment spans residues 633–674 (RRAMECSDMRPIKVIMWWAQPKLYVGRGMHEDMFSLFKYTTF). Residues 675–695 (WIMLLISKLAFNYYVEILPLI) traverse the membrane as a helical segment. The Extracellular segment spans residues 696-721 (TPTKMIMNLHIGHYQWHEFFPHATNN). The helical transmembrane segment at 722–742 (IGVVIAIWAPIVLVYLMDTQI) threads the bilayer. The Cytoplasmic portion of the chain corresponds to 743–1484 (WYAIFSTLFG…FDFYRMLSFY (742 aa)). Residues 1485 to 1505 (FTTIGFYFSSMLTVLTVYAFL) form a helical membrane-spanning segment. At 1506–1540 (YGRMYMVMSGLEKEILRLASPNQLEALEQALATQS) the chain is on the extracellular side. A helical membrane pass occupies residues 1541 to 1561 (IFQLGFLMVLPMVMEIGLEHG). The Cytoplasmic segment spans residues 1562 to 1564 (FRS). The helical transmembrane segment at 1565 to 1585 (AIVDFFIMQLQLASVFFTFQL) threads the bilayer. The Extracellular segment spans residues 1586–1628 (GTKSHYYGRTILHGGSKYRPTGRGFVVFHAKFAENYRLYSRSH). Residues 1629–1649 (FVKGLELLLLLVVYQIYGHSY) traverse the membrane as a helical segment. At 1650–1655 (RSSNLY) the chain is on the cytoplasmic side. A helical membrane pass occupies residues 1656–1676 (LYITVSMWFMVGSWLFAPFIF). Residues 1677 to 1730 (NPSGFEWQKTVDDWTDWKRWLGDRGGIGIPVEKSWESWWNVEQEHLKHTSIRGR) lie on the Extracellular side of the membrane. The chain crosses the membrane as a helical span at residues 1731–1751 (ILEITLALRFFIYQYGIVYQL). Topologically, residues 1752 to 1759 (NISQRSKS) are cytoplasmic. A helical membrane pass occupies residues 1760–1780 (FLVYGLSWVVLLTSLLVLKMV). Residues 1781–1796 (SMGRRRFGTDFQLMFR) are Extracellular-facing. A helical membrane pass occupies residues 1797–1817 (ILKALLFLGFLSVMTILFVVF). Over 1818 to 1823 (KLTLTD) the chain is Cytoplasmic. A helical transmembrane segment spans residues 1824–1844 (LSASVLAFLPTGWAILLIGQV). The Extracellular portion of the chain corresponds to 1845–1867 (LRSPIKALGVWDSVKELGRAYEN). The chain crosses the membrane as a helical span at residues 1868-1888 (IMGLVIFAPIAVLSWFPIVSE). Residues 1889-1921 (FQARLLFNQAFSRGLQISMILAGRKDKATSSHK) are Cytoplasmic-facing.

It belongs to the glycosyltransferase 48 family.

The protein resides in the cell membrane. It carries out the reaction [(1-&gt;3)-beta-D-glucosyl](n) + UDP-alpha-D-glucose = [(1-&gt;3)-beta-D-glucosyl](n+1) + UDP + H(+). In terms of biological role, probably involved in callose synthesis, but not required for callose formation after wounding or pathogen attack. During plant growth and development, callose is found as a transitory component of the cell plate in dividing cells, is a major component of pollen mother cell walls and pollen tubes, and is found as a structural component of plasmodesmatal canals. This chain is Putative callose synthase 6 (CALS6), found in Arabidopsis thaliana (Mouse-ear cress).